We begin with the raw amino-acid sequence, 314 residues long: Olfactory receptor 52K1 (314 aa).

The Extracellular segment spans residues 1–27 (MLPSNITSTHPAVFLLVGIPGLEHLHA). Asn5 is a glycosylation site (N-linked (GlcNAc...) asparagine). Residues 28-48 (WISIPFCFAYTLALLGNCTLL) traverse the membrane as a helical segment. The Cytoplasmic segment spans residues 49-56 (FIIQADAA). The helical transmembrane segment at 57 to 77 (LHEPMYLFLAMLATIDLVLSS) threads the bilayer. Residues 78–101 (TTLPKMLAIFWFRDQEINFFACLV) lie on the Extracellular side of the membrane. A disulfide bond links Cys99 and Cys191. Residues 102–122 (QMFFLHSFSIMESAVLLAMAF) traverse the membrane as a helical segment. Over 123–141 (DRYVAICKPLHYTTVLTGS) the chain is Cytoplasmic. The chain crosses the membrane as a helical span at residues 142-162 (LITKIGMAAVARAVTLMTPLP). Over 163-198 (FLLRRFHYCRGPVIAHCYCEHMAVVRLACGDTSFNN) the chain is Extracellular. The chain crosses the membrane as a helical span at residues 199 to 219 (IYGIAVAMFIVVLDLLFVILS). Over 220-239 (YVFILQAVLQLASQEARYKA) the chain is Cytoplasmic. The chain crosses the membrane as a helical span at residues 240–260 (FGTCVSHIGAILSTYTPVVIS). Over 261 to 275 (SVMHRVARHAAPRVH) the chain is Extracellular. Residues 276 to 296 (ILLAIFYLLFPPMVNPIIYGV) traverse the membrane as a helical segment. Residues 297 to 314 (KTKQIREYVLSLFQRKNM) are Cytoplasmic-facing.

It belongs to the G-protein coupled receptor 1 family.

The protein resides in the cell membrane. In terms of biological role, odorant receptor. This Homo sapiens (Human) protein is Olfactory receptor 52K1 (OR52K1).